Consider the following 246-residue polypeptide: Probable septum site-determining protein MinC (246 aa).

Belongs to the MinC family. As to quaternary structure, interacts with MinD and FtsZ.

Its function is as follows. Cell division inhibitor that blocks the formation of polar Z ring septums. Rapidly oscillates between the poles of the cell to destabilize FtsZ filaments that have formed before they mature into polar Z rings. Prevents FtsZ polymerization. The protein is Probable septum site-determining protein MinC of Lachnospira eligens (strain ATCC 27750 / DSM 3376 / VPI C15-48 / C15-B4) (Eubacterium eligens).